We begin with the raw amino-acid sequence, 111 residues long: Large ribosomal subunit protein uL24 (111 aa).

This sequence belongs to the universal ribosomal protein uL24 family. In terms of assembly, part of the 50S ribosomal subunit.

In terms of biological role, one of two assembly initiator proteins, it binds directly to the 5'-end of the 23S rRNA, where it nucleates assembly of the 50S subunit. One of the proteins that surrounds the polypeptide exit tunnel on the outside of the subunit. This is Large ribosomal subunit protein uL24 from Bifidobacterium animalis subsp. lactis (strain AD011).